The following is a 513-amino-acid chain: Maturase K (513 aa).

This sequence belongs to the intron maturase 2 family. MatK subfamily.

The protein resides in the plastid. Its subcellular location is the chloroplast. In terms of biological role, usually encoded in the trnK tRNA gene intron. Probably assists in splicing its own and other chloroplast group II introns. This Danthonia spicata (Poverty oatgrass) protein is Maturase K.